A 260-amino-acid chain; its full sequence is Methylthioribulose-1-phosphate dehydratase (260 aa).

A disordered region spans residues 1 to 26 (MTPPTTGLPAENTTDDNDHLVQSDDP). A compositionally biased stretch (basic and acidic residues) spans 16 to 26 (DNDHLVQSDDP). Cys-109 provides a ligand contact to substrate. Residues His-127 and His-129 each contribute to the Zn(2+) site. The active-site Proton donor/acceptor is Glu-154. His-211 provides a ligand contact to Zn(2+).

The protein belongs to the aldolase class II family. MtnB subfamily. Requires Zn(2+) as cofactor.

Its subcellular location is the cytoplasm. It catalyses the reaction 5-(methylsulfanyl)-D-ribulose 1-phosphate = 5-methylsulfanyl-2,3-dioxopentyl phosphate + H2O. It participates in amino-acid biosynthesis; L-methionine biosynthesis via salvage pathway; L-methionine from S-methyl-5-thio-alpha-D-ribose 1-phosphate: step 2/6. In terms of biological role, catalyzes the dehydration of methylthioribulose-1-phosphate (MTRu-1-P) into 2,3-diketo-5-methylthiopentyl-1-phosphate (DK-MTP-1-P). This chain is Methylthioribulose-1-phosphate dehydratase, found in Podospora anserina (strain S / ATCC MYA-4624 / DSM 980 / FGSC 10383) (Pleurage anserina).